Consider the following 564-residue polypeptide: Ferric reductase transmembrane component 1 (564 aa).

A glycan (N-linked (GlcNAc...) asparagine) is linked at N4. Transmembrane regions (helical) follow at residues 10–30 (TVIAICLILGILLAFILMFWL) and 73–93 (VILTLIAVPVVFAISIPFIGM). N-linked (GlcNAc...) asparagine glycosylation is present at N111. A helical transmembrane segment spans residues 117 to 137 (VAARLGFLACGLYVTSYFFSI). The 134-residue stretch at 121–254 (LGFLACGLYV…VYMKVCVAVY (134 aa)) folds into the Ferric oxidoreductase domain. Residues H157 and H171 each contribute to the heme site. 2 consecutive transmembrane segments (helical) span residues 160–180 (LSQYAIMIGAIHGFAYIGLAA) and 193–213 (IIGYVILGLMVIMIVSSLPFF). Heme contacts are provided by H225 and H239. The region spanning 255 to 410 (VFDRGCRMLR…DGPYGPVSNP (156 aa)) is the FAD-binding FR-type domain. An N-linked (GlcNAc...) asparagine glycan is attached at N268. 317-323 (HPFTIAS) provides a ligand contact to FAD. The N-linked (GlcNAc...) asparagine glycan is linked to N360. 3 positions are modified to phosphoserine: S362, S381, and S383. A helical transmembrane segment spans residues 417 to 437 (LFLFAGGVGVSYILPIILDTI). 419-427 (LFAGGVGVS) is a binding site for NAD(+). N-linked (GlcNAc...) asparagine glycosylation is present at N501.

This sequence belongs to the ferric reductase (FRE) family. The cofactor is FAD. Requires heme as cofactor.

It localises to the cell membrane. The catalysed reaction is 2 a Fe(II)-siderophore + NADP(+) + H(+) = 2 a Fe(III)-siderophore + NADPH. In terms of biological role, metalloreductase responsible for reducing extracellular iron and copper prior to import. Catalyzes the reductive uptake of Fe(3+)-salts and Fe(3+) bound to catecholate or hydroxamate siderophores. Fe(3+) is reduced to Fe(2+), which then dissociates from the siderophore and can be imported by the high-affinity Fe(2+) transport complex in the plasma membrane. Also participates in Cu(2+) reduction and Cu(+) uptake. The polypeptide is Ferric reductase transmembrane component 1 (frp1) (Schizosaccharomyces pombe (strain 972 / ATCC 24843) (Fission yeast)).